The following is a 153-amino-acid chain: Urease accessory protein UreE (153 aa).

The protein belongs to the UreE family.

Its subcellular location is the cytoplasm. Functionally, involved in urease metallocenter assembly. Binds nickel. Probably functions as a nickel donor during metallocenter assembly. The sequence is that of Urease accessory protein UreE from Acetivibrio thermocellus (strain ATCC 27405 / DSM 1237 / JCM 9322 / NBRC 103400 / NCIMB 10682 / NRRL B-4536 / VPI 7372) (Clostridium thermocellum).